The chain runs to 291 residues: Foldase protein PrsA 2 (291 aa).

A signal peptide spans 1–20 (MKKKLILGLVMMMALFSLAA). Residue Cys21 is the site of N-palmitoyl cysteine attachment. The S-diacylglycerol cysteine moiety is linked to residue Cys21. In terms of domain architecture, PpiC spans 135-226 (QPDITVSHIL…YGYHIIQMDK (92 aa)).

It belongs to the PrsA family.

Its subcellular location is the cell membrane. The enzyme catalyses [protein]-peptidylproline (omega=180) = [protein]-peptidylproline (omega=0). In terms of biological role, plays a major role in protein secretion by helping the post-translocational extracellular folding of several secreted proteins. This Listeria innocua serovar 6a (strain ATCC BAA-680 / CLIP 11262) protein is Foldase protein PrsA 2 (prsA2).